The chain runs to 253 residues: HTH-type transcriptional regulator YdeO (253 aa).

The 97-residue stretch at 137 to 233 folds into the HTH araC/xylS-type domain; that stretch reads GKVRNIVNMK…GNSPKRVSKE (97 aa). DNA-binding regions (H-T-H motif) lie at residues 154–175 and 200–223; these read KDIC…KQEQ and VNKI…RKHF.

Induces the expression of gadE and mdtEF. Could also regulate the expression of other genes involved in acid resistance. This Escherichia coli O6:H1 (strain CFT073 / ATCC 700928 / UPEC) protein is HTH-type transcriptional regulator YdeO (ydeO).